The following is a 383-amino-acid chain: MAKHLFTSESVSEGHPDKIADQISDAVLDAILEQDPKARVACETYVKTGMVMVGGEVTTSAWVDIEELTRKTVREIGYTHSDMGFDADSCAVLNAIGKQSPDINQGVDRADPKEQGAGDQGLMFGYASNETDVLMPAPITYAHALVKRQSEVRKDNTLPWLRPDAKSQVTFAYEDNKIVGIDAVVLSTQHCDSVSQSDLIEGVMETIIKPVLPAQWLNKETKFFINPTGRFVIGGPMGDCGLTGRKIIVDTYGGMARHGGGAFSGKDPSKVDRSAAYAARYVAKNIVAAGLADRCEIQVSYAIGVAEPTSISVETFGTGKVSEEVLIGLVRQHFDLRPYGLTEMLDLARPIYKATAAYGHFGRNEFPWERTDKAEALRADAKL.

His15 lines the ATP pocket. Asp17 provides a ligand contact to Mg(2+). Residue Glu43 participates in K(+) binding. The L-methionine site is built by Glu56 and Gln99. The interval 99 to 109 (QSPDINQGVDR) is flexible loop. ATP-binding positions include 164-166 (DAK), 230-231 (RF), Asp239, 245-246 (RK), Ala262, and Lys266. Asp239 is an L-methionine binding site. L-methionine is bound at residue Lys270.

Belongs to the AdoMet synthase family. In terms of assembly, homotetramer; dimer of dimers. It depends on Mg(2+) as a cofactor. K(+) is required as a cofactor.

Its subcellular location is the cytoplasm. The enzyme catalyses L-methionine + ATP + H2O = S-adenosyl-L-methionine + phosphate + diphosphate. The protein operates within amino-acid biosynthesis; S-adenosyl-L-methionine biosynthesis; S-adenosyl-L-methionine from L-methionine: step 1/1. In terms of biological role, catalyzes the formation of S-adenosylmethionine (AdoMet) from methionine and ATP. The overall synthetic reaction is composed of two sequential steps, AdoMet formation and the subsequent tripolyphosphate hydrolysis which occurs prior to release of AdoMet from the enzyme. The sequence is that of S-adenosylmethionine synthase from Shewanella loihica (strain ATCC BAA-1088 / PV-4).